Reading from the N-terminus, the 383-residue chain is Histidine decarboxylase (383 aa).

His120 serves as a coordination point for substrate. At Lys233 the chain carries N6-(pyridoxal phosphate)lysine.

It belongs to the group II decarboxylase family. In terms of assembly, homotetramer. Requires pyridoxal 5'-phosphate as cofactor.

It carries out the reaction L-histidine + H(+) = histamine + CO2. This chain is Histidine decarboxylase, found in Acinetobacter baumannii (strain AB307-0294).